Here is a 455-residue protein sequence, read N- to C-terminus: Adenylyltransferase and sulfurtransferase MOCS3 (455 aa).

Residues Gly-90, Asp-111, 118-122 (SNLAR), Lys-135, and 179-180 (DN) each bind ATP. The interaction with NFS1 stretch occupies residues 156-236 (AQALTPATAL…QPPPAETVTN (81 aa)). Cys-220 and Cys-223 together coordinate Zn(2+). Catalysis depends on Cys-237, which acts as the Glycyl thioester intermediate; for adenylyltransferase activity. Cys-295 and Cys-298 together coordinate Zn(2+). Cys-314 and Cys-322 are oxidised to a cystine. The 109-residue stretch at 345 to 453 (SGSPHLLLDV…WAAKVDGTFP (109 aa)) folds into the Rhodanese domain. Cys-410 (cysteine persulfide intermediate; for sulfurtransferase activity) is an active-site residue. Cys-410 is subject to Cysteine persulfide.

This sequence in the N-terminal section; belongs to the HesA/MoeB/ThiF family. UBA4 subfamily. Interacts with NFS1. Zn(2+) serves as cofactor.

It is found in the cytoplasm. The protein resides in the cytosol. The catalysed reaction is [molybdopterin-synthase sulfur-carrier protein]-C-terminal Gly-Gly + ATP + H(+) = [molybdopterin-synthase sulfur-carrier protein]-C-terminal Gly-Gly-AMP + diphosphate. The enzyme catalyses [molybdopterin-synthase sulfur-carrier protein]-C-terminal Gly-Gly-AMP + S-sulfanyl-L-cysteinyl-[cysteine desulfurase] + AH2 = [molybdopterin-synthase sulfur-carrier protein]-C-terminal-Gly-aminoethanethioate + L-cysteinyl-[cysteine desulfurase] + A + AMP + 2 H(+). It functions in the pathway tRNA modification; 5-methoxycarbonylmethyl-2-thiouridine-tRNA biosynthesis. It participates in cofactor biosynthesis; molybdopterin biosynthesis. In terms of biological role, plays a central role in 2-thiolation of mcm(5)S(2)U at tRNA wobble positions of cytosolic tRNA(Lys), tRNA(Glu) and tRNA(Gln). Also essential during biosynthesis of the molybdenum cofactor. Acts by mediating the C-terminal thiocarboxylation of sulfur carriers URM1 and MOCS2A. Its N-terminus first activates URM1 and MOCS2A as acyl-adenylates (-COAMP), then the persulfide sulfur on the catalytic cysteine is transferred to URM1 and MOCS2A to form thiocarboxylation (-COSH) of their C-terminus. The reaction probably involves hydrogen sulfide that is generated from the persulfide intermediate and that acts as a nucleophile towards URM1 and MOCS2A. Subsequently, a transient disulfide bond is formed. Does not use thiosulfate as sulfur donor; NFS1 acting as a sulfur donor for thiocarboxylation reactions. In Sus scrofa (Pig), this protein is Adenylyltransferase and sulfurtransferase MOCS3.